The chain runs to 767 residues: Transferrin receptor protein 1 (767 aa).

The Cytoplasmic portion of the chain corresponds to 1–67; sequence MDQARSAFSN…LTKPKRFNGS (67 aa). Phosphoserine is present on residues Ser-9 and Ser-18. Phosphotyrosine is present on Tyr-19. The Endocytosis signal signature appears at 19-22; the sequence is YTRF. The residue at position 20 (Thr-20) is a Phosphothreonine. Position 23 is a phosphoserine (Ser-23). Residues 60-63 carry the Stop-transfer sequence motif; it reads KPKR. The helical; Signal-anchor for type II membrane protein transmembrane segment at 68–88 threads the bilayer; sequence FCYAVIAVIIFFLIGFMIGYL. Cys-69 carries the S-palmitoyl cysteine lipid modification. At 89-767 the chain is on the extracellular side; the sequence is GYCKRVEPKS…GDIWDIDNEF (679 aa). Residues 96-110 are compositionally biased toward basic and acidic residues; that stretch reads PKSECGRSGDSKEIE. Positions 96–122 are disordered; the sequence is PKSECGRSGDSKEIEGTEPPETEEYFP. Residues 111–121 are compositionally biased toward acidic residues; the sequence is GTEPPETEEYF. Residues Asn-211, Asn-258, and Asn-324 are each glycosylated (N-linked (GlcNAc...) asparagine). The 91-residue stretch at 230 to 320 folds into the PA domain; the sequence is SKATTVTGKL…GTGDPYTPGF (91 aa). A ligand-binding region spans residues 576–767; sequence TMDTYEVLSQ…GDIWDIDNEF (192 aa). Residues 653–655 carry the Cell attachment site motif; sequence RGD. N-linked (GlcNAc...) asparagine glycosylation is present at Asn-734.

This sequence belongs to the peptidase M28 family. M28B subfamily. Homodimer; disulfide-linked. Binds one transferrin or HFE molecule per subunit. Interacts with SH3BP4. Interacts with STEAP3; facilitates TFRC endocytosis in erythroid precursor cells. In terms of processing, stearoylated by ZDHHC6 which inhibits TFRC-mediated activation of the JNK pathway and promotes mitochondrial fragmentation. Stearoylation does not affect iron uptake.

Its subcellular location is the cell membrane. The protein localises to the melanosome. Functionally, cellular uptake of iron occurs via receptor-mediated endocytosis of ligand-occupied transferrin receptor into specialized endosomes. Endosomal acidification leads to iron release. The apotransferrin-receptor complex is then recycled to the cell surface with a return to neutral pH and the concomitant loss of affinity of apotransferrin for its receptor. Transferrin receptor is necessary for development of erythrocytes and the nervous system. Positively regulates T and B cell proliferation through iron uptake. Acts as a lipid sensor that regulates mitochondrial fusion by regulating activation of the JNK pathway. When dietary levels of stearate (C18:0) are low, promotes activation of the JNK pathway, resulting in HUWE1-mediated ubiquitination and subsequent degradation of the mitofusin MFN2 and inhibition of mitochondrial fusion. When dietary levels of stearate (C18:0) are high, TFRC stearoylation inhibits activation of the JNK pathway and thus degradation of the mitofusin MFN2. Mediates uptake of NICOL1 into fibroblasts where it may regulate extracellular matrix production. The protein is Transferrin receptor protein 1 (TFRC) of Equus caballus (Horse).